Consider the following 47-residue polypeptide: High light-inducible protein HliC (47 aa).

At Met1–Ala14 the chain is on the cytoplasmic side. The short motif at Glu15 to Arg20 is the Chlorophyll-binding motif element. The segment at Glu15–Ser36 is a transmembrane helix. The Lumenal, thylakoid portion of the chain corresponds to Gly37 to Leu47.

It belongs to the Hlip family. As to quaternary structure, forms heterodimers with both HliA and HliB; these are associated with photosystem II (PSII) assembly intermediates containing CP47 (psbB). In the absence of CP47 (psbB) and HliD, forms a homooligomer in vivo that binds 2 chlorophyll a and 1 beta-carotenoid per monomer. Cofractionates in an approximately 50 kDa fraction the thylakoid membrane with HliD. Associated in vivo with monomeric PSII. Purified in several chlorophyll- and carotenoid-containing complexes, including photosystem II (PSII) assembly intermediate complex RCII* (iD1, D1, D2, PsbE, PsbF, PsbI, Ycf39, Ycf48, HliC and HliD) and the Ycf39-Hlip complex (Ycf39, HliC, HliD and pigments).

The protein localises to the cellular thylakoid membrane. In terms of biological role, forms a number of heteromers involved in photosystem II (PSII) assembly and/or repair under high light stress. Required for binding of chlorophyll and carotenoids by the Ycf39-Hlip complex. The Ycf39-Hlip complex binds D1 at an early stage of PSII assembly along with Ycf48, ribosomes and ChlG, the last enzyme in chlorophyll biosynthesis; it may be involved in chlorophyll reuse and delivery to D1 in the initial stages of PSII assembly. HliA-HliC and HliB-HliC heterodimers bind chlorophyll and carotenoids in a 1:0.6 ratio. Complexes bind mostly beta-carotenoid, but minor amounts of echinenone and beta-crytoxanthin are also detected. The complexes efficiently quench chlorophyll fluorescence, contributing to photoprotection. Deletion of 4 to 5 members of the Hlip family suggests the proteins are involved in regulation of chlorophyll biosynthesis, in stabilization of chlorophyll-binding proteins and/or in reuse of chlorophylls, and may regulate tetrapyrrole biosynthesis. Might bind chlorophyll and/or carotenoids in association with HliD (called the ScpBE pair). Functionally, the Hlips might regulate tetrapyrrole biosynthesis, maybe at the level of aminolevulinic acid synthesis and probably stabilize PSII assembly intermediates. The polypeptide is High light-inducible protein HliC (hliC) (Synechocystis sp. (strain ATCC 27184 / PCC 6803 / Kazusa)).